The following is a 333-amino-acid chain: DNA-directed RNA polymerase subunit alpha (333 aa).

The tract at residues 1–234 is alpha N-terminal domain (alpha-NTD); the sequence is MQSSVNEFLT…QQLAAFVDLK (234 aa). The segment at 248–333 is alpha C-terminal domain (alpha-CTD); the sequence is IDPILLRPVD…SLKKDDKATA (86 aa).

This sequence belongs to the RNA polymerase alpha chain family. In terms of assembly, homodimer. The RNAP catalytic core consists of 2 alpha, 1 beta, 1 beta' and 1 omega subunit. When a sigma factor is associated with the core the holoenzyme is formed, which can initiate transcription.

The catalysed reaction is RNA(n) + a ribonucleoside 5'-triphosphate = RNA(n+1) + diphosphate. In terms of biological role, DNA-dependent RNA polymerase catalyzes the transcription of DNA into RNA using the four ribonucleoside triphosphates as substrates. The chain is DNA-directed RNA polymerase subunit alpha from Pseudomonas aeruginosa (strain UCBPP-PA14).